Reading from the N-terminus, the 259-residue chain is Ribonuclease HII (259 aa).

In terms of domain architecture, RNase H type-2 spans 70–258 (TLIAGIDEVG…VKSLVLGKKE (189 aa)). A divalent metal cation is bound by residues aspartate 76, glutamate 77, and aspartate 168.

This sequence belongs to the RNase HII family. It depends on Mn(2+) as a cofactor. Requires Mg(2+) as cofactor.

Its subcellular location is the cytoplasm. The enzyme catalyses Endonucleolytic cleavage to 5'-phosphomonoester.. Functionally, endonuclease that specifically degrades the RNA of RNA-DNA hybrids. This Streptococcus pneumoniae (strain Taiwan19F-14) protein is Ribonuclease HII.